A 512-amino-acid chain; its full sequence is Bifunctional purine biosynthesis protein PurH (512 aa).

The 144-residue stretch at 1–144 (MKRALVSVSD…KNYHDVTIVV (144 aa)) folds into the MGS-like domain.

The protein belongs to the PurH family.

The enzyme catalyses (6R)-10-formyltetrahydrofolate + 5-amino-1-(5-phospho-beta-D-ribosyl)imidazole-4-carboxamide = 5-formamido-1-(5-phospho-D-ribosyl)imidazole-4-carboxamide + (6S)-5,6,7,8-tetrahydrofolate. The catalysed reaction is IMP + H2O = 5-formamido-1-(5-phospho-D-ribosyl)imidazole-4-carboxamide. The protein operates within purine metabolism; IMP biosynthesis via de novo pathway; 5-formamido-1-(5-phospho-D-ribosyl)imidazole-4-carboxamide from 5-amino-1-(5-phospho-D-ribosyl)imidazole-4-carboxamide (10-formyl THF route): step 1/1. It functions in the pathway purine metabolism; IMP biosynthesis via de novo pathway; IMP from 5-formamido-1-(5-phospho-D-ribosyl)imidazole-4-carboxamide: step 1/1. This is Bifunctional purine biosynthesis protein PurH from Limosilactobacillus reuteri (strain DSM 20016) (Lactobacillus reuteri).